Consider the following 445-residue polypeptide: 26S proteasome regulatory subunit RPN5 (445 aa).

Position 2 is an N-acetylserine (Ser2). In terms of domain architecture, PCI spans 233 to 407 (EYLEVAQYLQ…KIVNFEKPKN (175 aa)).

The protein belongs to the proteasome subunit p55 family. Post-translationally, N-acetylated by NAT1.

Acts as a regulatory subunit of the 26S proteasome which is involved in the ATP-dependent degradation of ubiquitinated proteins. In Saccharomyces cerevisiae (strain ATCC 204508 / S288c) (Baker's yeast), this protein is 26S proteasome regulatory subunit RPN5 (RPN5).